The chain runs to 224 residues: UPF0758 protein IL0240 (224 aa).

The region spanning 102–224 is the MPN domain; it reads GFTEPTMVKD…PISFAERGLL (123 aa). Zn(2+) is bound by residues His-173, His-175, and Asp-186. A JAMM motif motif is present at residues 173-186; that stretch reads HNHPSGVAEPSQAD.

It belongs to the UPF0758 family.

The polypeptide is UPF0758 protein IL0240 (Idiomarina loihiensis (strain ATCC BAA-735 / DSM 15497 / L2-TR)).